Reading from the N-terminus, the 614-residue chain is UvrABC system protein C (614 aa).

A GIY-YIG domain is found at 20–98 (TAPGVYRMYA…IKSLSPRYNV (79 aa)). In terms of domain architecture, UVR spans 207-242 (DELTRELGEQMQAASEALEFEQAARLRDLISSLRSM).

This sequence belongs to the UvrC family. As to quaternary structure, interacts with UvrB in an incision complex.

It is found in the cytoplasm. The UvrABC repair system catalyzes the recognition and processing of DNA lesions. UvrC both incises the 5' and 3' sides of the lesion. The N-terminal half is responsible for the 3' incision and the C-terminal half is responsible for the 5' incision. The protein is UvrABC system protein C of Stenotrophomonas maltophilia (strain R551-3).